Here is a 229-residue protein sequence, read N- to C-terminus: Heptaprenylglyceryl phosphate synthase (229 aa).

Lys12 is a sn-glycerol 1-phosphate binding site. 2 residues coordinate Mg(2+): Asp14 and Ser40. Sn-glycerol 1-phosphate is bound by residues 159 to 164 (YLEYSG), Gly189, and 209 to 210 (GN).

Belongs to the GGGP/HepGP synthase family. Group I subfamily. In terms of assembly, homodimer. The cofactor is Mg(2+).

It catalyses the reaction sn-glycerol 1-phosphate + all-trans-heptaprenyl diphosphate = 3-heptaprenyl-sn-glycero-1-phosphate + diphosphate. It functions in the pathway membrane lipid metabolism; glycerophospholipid metabolism. In terms of biological role, prenyltransferase that catalyzes in vivo the transfer of the heptaprenyl moiety of heptaprenyl pyrophosphate (HepPP; 35 carbon atoms) to the C3 hydroxyl of sn-glycerol-1-phosphate (G1P), producing heptaprenylglyceryl phosphate (HepGP). This reaction is an ether-bond-formation step in the biosynthesis of archaea-type G1P-based membrane lipids found in Bacillales. The sequence is that of Heptaprenylglyceryl phosphate synthase from Bacillus thuringiensis (strain Al Hakam).